Here is a 124-residue protein sequence, read N- to C-terminus: Glycine cleavage system H protein (124 aa).

The Lipoyl-binding domain maps to 19-101 (VATVGITDHA…ESGAWFFRMT (83 aa)). N6-lipoyllysine is present on K60.

Belongs to the GcvH family. The glycine cleavage system is composed of four proteins: P, T, L and H. (R)-lipoate is required as a cofactor.

In terms of biological role, the glycine cleavage system catalyzes the degradation of glycine. The H protein shuttles the methylamine group of glycine from the P protein to the T protein. This Acidiphilium cryptum (strain JF-5) protein is Glycine cleavage system H protein.